We begin with the raw amino-acid sequence, 82 residues long: ATP synthase subunit c, chloroplastic (82 aa).

Helical transmembrane passes span 4–24 (IISA…AIGP) and 57–77 (LAFM…LLFA).

It belongs to the ATPase C chain family. In terms of assembly, F-type ATPases have 2 components, F(1) - the catalytic core - and F(0) - the membrane proton channel. F(1) has five subunits: alpha(3), beta(3), gamma(1), delta(1), epsilon(1). F(0) has four main subunits: a(1), b(1), b'(1) and c(10-14). The alpha and beta chains form an alternating ring which encloses part of the gamma chain. F(1) is attached to F(0) by a central stalk formed by the gamma and epsilon chains, while a peripheral stalk is formed by the delta, b and b' chains.

The protein resides in the plastid. The protein localises to the chloroplast thylakoid membrane. In terms of biological role, f(1)F(0) ATP synthase produces ATP from ADP in the presence of a proton or sodium gradient. F-type ATPases consist of two structural domains, F(1) containing the extramembraneous catalytic core and F(0) containing the membrane proton channel, linked together by a central stalk and a peripheral stalk. During catalysis, ATP synthesis in the catalytic domain of F(1) is coupled via a rotary mechanism of the central stalk subunits to proton translocation. Key component of the F(0) channel; it plays a direct role in translocation across the membrane. A homomeric c-ring of between 10-14 subunits forms the central stalk rotor element with the F(1) delta and epsilon subunits. In Antithamnion sp. (Red alga), this protein is ATP synthase subunit c, chloroplastic.